The primary structure comprises 320 residues: ATP-dependent 6-phosphofructokinase (320 aa).

Residue glycine 12 participates in ATP binding. Arginine 22–arginine 26 is a binding site for ADP. ATP is bound by residues arginine 73–phenylalanine 74 and glycine 103–serine 106. Aspartate 104 lines the Mg(2+) pocket. Residue threonine 126–aspartate 128 coordinates substrate. The Proton acceptor role is filled by aspartate 128. Arginine 155 lines the ADP pocket. Substrate contacts are provided by residues arginine 163 and methionine 170–arginine 172. ADP-binding positions include glycine 186–glutamate 188, lysine 212, and lysine 214–histidine 216. Substrate is bound by residues glutamate 223, arginine 244, and histidine 250–arginine 253.

This sequence belongs to the phosphofructokinase type A (PFKA) family. ATP-dependent PFK group I subfamily. Prokaryotic clade 'B1' sub-subfamily. Homotetramer. Mg(2+) serves as cofactor.

The protein resides in the cytoplasm. It carries out the reaction beta-D-fructose 6-phosphate + ATP = beta-D-fructose 1,6-bisphosphate + ADP + H(+). Its pathway is carbohydrate degradation; glycolysis; D-glyceraldehyde 3-phosphate and glycerone phosphate from D-glucose: step 3/4. Its activity is regulated as follows. Allosterically activated by ADP and other diphosphonucleosides, and allosterically inhibited by phosphoenolpyruvate. Functionally, catalyzes the phosphorylation of D-fructose 6-phosphate to fructose 1,6-bisphosphate by ATP, the first committing step of glycolysis. The chain is ATP-dependent 6-phosphofructokinase from Vibrio cholerae serotype O1 (strain ATCC 39315 / El Tor Inaba N16961).